Reading from the N-terminus, the 673-residue chain is DNA ligase (673 aa).

Residues 35–39 (DAQYD), 84–85 (SL), and Glu115 contribute to the NAD(+) site. The N6-AMP-lysine intermediate role is filled by Lys117. NAD(+) contacts are provided by Arg138, Glu178, Lys294, and Lys318. Residues Cys412, Cys415, Cys430, and Cys435 each coordinate Zn(2+). In terms of domain architecture, BRCT spans 594–673 (LQSDRLAGKS…DELHALLVDE (80 aa)).

Belongs to the NAD-dependent DNA ligase family. LigA subfamily. Mg(2+) serves as cofactor. It depends on Mn(2+) as a cofactor.

The enzyme catalyses NAD(+) + (deoxyribonucleotide)n-3'-hydroxyl + 5'-phospho-(deoxyribonucleotide)m = (deoxyribonucleotide)n+m + AMP + beta-nicotinamide D-nucleotide.. Functionally, DNA ligase that catalyzes the formation of phosphodiester linkages between 5'-phosphoryl and 3'-hydroxyl groups in double-stranded DNA using NAD as a coenzyme and as the energy source for the reaction. It is essential for DNA replication and repair of damaged DNA. In Herpetosiphon aurantiacus (strain ATCC 23779 / DSM 785 / 114-95), this protein is DNA ligase.